An 80-amino-acid polypeptide reads, in one-letter code: Conotoxin Bu14 (80 aa).

Residues 1–8 (AACQLGTA) form the signal peptide. Residues 9–40 (ASFARDKQDYPAVRSDGRQDSKDSTLDRIAKR) constitute a propeptide that is removed on maturation. 3 disulfides stabilise this stretch: Cys-41-Cys-55, Cys-48-Cys-59, and Cys-54-Cys-69.

This sequence belongs to the conotoxin O1 superfamily. Expressed by the venom duct.

Its subcellular location is the secreted. This is Conotoxin Bu14 from Conus bullatus (Bubble cone).